The chain runs to 55 residues: Photosystem II reaction center protein K (55 aa).

The propeptide occupies 1–18 (MFYIHLENTFDLSSTILV). A helical transmembrane segment spans residues 26–46 (IFDPIVDVMPIIPLFFFLLAF).

This sequence belongs to the PsbK family. In terms of assembly, PSII is composed of 1 copy each of membrane proteins PsbA, PsbB, PsbC, PsbD, PsbE, PsbF, PsbH, PsbI, PsbJ, PsbK, PsbL, PsbM, PsbT, PsbX, PsbY, PsbZ, Psb30/Ycf12, at least 3 peripheral proteins of the oxygen-evolving complex and a large number of cofactors. It forms dimeric complexes.

It localises to the plastid. It is found in the chloroplast thylakoid membrane. Its function is as follows. One of the components of the core complex of photosystem II (PSII). PSII is a light-driven water:plastoquinone oxidoreductase that uses light energy to abstract electrons from H(2)O, generating O(2) and a proton gradient subsequently used for ATP formation. It consists of a core antenna complex that captures photons, and an electron transfer chain that converts photonic excitation into a charge separation. The chain is Photosystem II reaction center protein K from Anthoceros angustus (Hornwort).